The primary structure comprises 618 residues: MPQYRSHTSTHGRNMAGARSLWRATGMKDGDFGKPIIAVVNSFTQFVPGHVHLKDMGQLVAREIEAAGGVAKEFNTIAIDDGIAMGHSGMLYSLPSRDLIADSVEYMVNAHCADAMVCISNCDKITPGMLMAAMRLNIPVIFVSGGPMEAGKVKIQGQVIHLDLIDAMVKAADHSVSQAELDDVERSACPTCGSCSGMFTANSMNCLTEAFGLSLPGNGTVVATHADRKQLFLRAGRQIVELCKRYYEQDDASVLPRAIATKAAFENAMTLDVAMGGSTNTVLHILATAQEAGVDFTMADIDRISRSVPCLCKVAPMTDKYHIEDVHRAGGIMGILGELDRAGLINRDVPNVYAKNLGEAIDRWDVVRQHDVKVHEFFKAAPGGVPTQVAFSQDRRFNELDIDRTHGCIRNKANAYSQEGGLAVLYGNIALDGCIVKTAGVDESIWKFTGKARVFESQDAAVEAILGEKIVAGDVVVIRYEGPKGGPGMQEMLYPTSYLKSMGLGKECALLTDGRFSGGTSGLSIGHASPEAADGGAIGLVEEGDTIEIDIPNRRIHLAVTDGELAQRRAAMEAKGEAAWQPVSRERVISPALQAYALMATSADKGAVRDVKQIQRRK.

Asp81 lines the Mg(2+) pocket. Cys122 is a [2Fe-2S] cluster binding site. The Mg(2+) site is built by Asp123 and Lys124. Lys124 carries the N6-carboxylysine modification. A [2Fe-2S] cluster-binding site is contributed by Cys195. Position 491 (Glu491) interacts with Mg(2+). Ser517 acts as the Proton acceptor in catalysis.

This sequence belongs to the IlvD/Edd family. In terms of assembly, homodimer. The cofactor is [2Fe-2S] cluster. Mg(2+) is required as a cofactor.

The catalysed reaction is (2R)-2,3-dihydroxy-3-methylbutanoate = 3-methyl-2-oxobutanoate + H2O. It carries out the reaction (2R,3R)-2,3-dihydroxy-3-methylpentanoate = (S)-3-methyl-2-oxopentanoate + H2O. It functions in the pathway amino-acid biosynthesis; L-isoleucine biosynthesis; L-isoleucine from 2-oxobutanoate: step 3/4. It participates in amino-acid biosynthesis; L-valine biosynthesis; L-valine from pyruvate: step 3/4. Its function is as follows. Functions in the biosynthesis of branched-chain amino acids. Catalyzes the dehydration of (2R,3R)-2,3-dihydroxy-3-methylpentanoate (2,3-dihydroxy-3-methylvalerate) into 2-oxo-3-methylpentanoate (2-oxo-3-methylvalerate) and of (2R)-2,3-dihydroxy-3-methylbutanoate (2,3-dihydroxyisovalerate) into 2-oxo-3-methylbutanoate (2-oxoisovalerate), the penultimate precursor to L-isoleucine and L-valine, respectively. The polypeptide is Dihydroxy-acid dehydratase (Dechloromonas aromatica (strain RCB)).